The primary structure comprises 347 residues: Protein RecA (347 aa).

Residue glycine 66 to threonine 73 coordinates ATP.

The protein belongs to the RecA family.

The protein resides in the cytoplasm. Functionally, can catalyze the hydrolysis of ATP in the presence of single-stranded DNA, the ATP-dependent uptake of single-stranded DNA by duplex DNA, and the ATP-dependent hybridization of homologous single-stranded DNAs. It interacts with LexA causing its activation and leading to its autocatalytic cleavage. The sequence is that of Protein RecA from Methylococcus capsulatus (strain ATCC 33009 / NCIMB 11132 / Bath).